The primary structure comprises 172 residues: FMN reductase (NADH) RutF 2 (172 aa).

The protein belongs to the non-flavoprotein flavin reductase family. RutF subfamily.

It catalyses the reaction FMNH2 + NAD(+) = FMN + NADH + 2 H(+). Its function is as follows. Catalyzes the reduction of FMN to FMNH2 which is used to reduce pyrimidine by RutA via the Rut pathway. This is FMN reductase (NADH) RutF 2 from Methylorubrum extorquens (strain PA1) (Methylobacterium extorquens).